Consider the following 210-residue polypeptide: Peptidyl-tRNA hydrolase (210 aa).

Tyrosine 15 contacts tRNA. Histidine 20 (proton acceptor) is an active-site residue. Residues phenylalanine 66, asparagine 68, and asparagine 114 each coordinate tRNA. A disordered region spans residues 186–210 (IHTSKPPRPKPPRREPGDGGTPATA).

The protein belongs to the PTH family. In terms of assembly, monomer.

Its subcellular location is the cytoplasm. It carries out the reaction an N-acyl-L-alpha-aminoacyl-tRNA + H2O = an N-acyl-L-amino acid + a tRNA + H(+). Functionally, hydrolyzes ribosome-free peptidyl-tRNAs (with 1 or more amino acids incorporated), which drop off the ribosome during protein synthesis, or as a result of ribosome stalling. Its function is as follows. Catalyzes the release of premature peptidyl moieties from peptidyl-tRNA molecules trapped in stalled 50S ribosomal subunits, and thus maintains levels of free tRNAs and 50S ribosomes. The polypeptide is Peptidyl-tRNA hydrolase (Variovorax paradoxus (strain S110)).